The sequence spans 257 residues: Glutamate racemase (257 aa).

Residues 12–13 (DS) and 44–45 (YG) each bind substrate. The Proton donor/acceptor role is filled by Cys75. A substrate-binding site is contributed by 76 to 77 (NT). Cys176 serves as the catalytic Proton donor/acceptor. Residue 177–178 (TH) coordinates substrate.

This sequence belongs to the aspartate/glutamate racemases family.

It catalyses the reaction L-glutamate = D-glutamate. It functions in the pathway cell wall biogenesis; peptidoglycan biosynthesis. Provides the (R)-glutamate required for cell wall biosynthesis. The protein is Glutamate racemase of Thermus thermophilus (strain ATCC BAA-163 / DSM 7039 / HB27).